A 158-amino-acid chain; its full sequence is Pleckstrin homology domain-containing family J member 1 (158 aa).

Positions 15–108 (PTQRAAELGM…WIDAIIKASY (94 aa)) constitute a PH domain.

The polypeptide is Pleckstrin homology domain-containing family J member 1 (plekhj1) (Danio rerio (Zebrafish)).